Here is a 454-residue protein sequence, read N- to C-terminus: Bifunctional protein GlmU (454 aa).

The tract at residues 1 to 232 (MTDRTCLSIV…VDNVIGINNR (232 aa)) is pyrophosphorylase. Residues 11–14 (LAAG), K25, Q78, and 83–84 (GT) contribute to the UDP-N-acetyl-alpha-D-glucosamine site. D108 contacts Mg(2+). UDP-N-acetyl-alpha-D-glucosamine is bound by residues G144, E158, N173, and N230. N230 lines the Mg(2+) pocket. The segment at 233–253 (AELAEAETIWQNRKRRELMLS) is linker. The segment at 254–454 (GVTLIAPETV…AIKAAKSVSK (201 aa)) is N-acetyltransferase. The UDP-N-acetyl-alpha-D-glucosamine site is built by R319 and K337. H349 functions as the Proton acceptor in the catalytic mechanism. UDP-N-acetyl-alpha-D-glucosamine-binding residues include Y352 and N363. Residues A366, 372-373 (NY), S391, S409, and R426 contribute to the acetyl-CoA site.

The protein in the N-terminal section; belongs to the N-acetylglucosamine-1-phosphate uridyltransferase family. It in the C-terminal section; belongs to the transferase hexapeptide repeat family. As to quaternary structure, homotrimer. Mg(2+) is required as a cofactor.

The protein localises to the cytoplasm. The enzyme catalyses alpha-D-glucosamine 1-phosphate + acetyl-CoA = N-acetyl-alpha-D-glucosamine 1-phosphate + CoA + H(+). It catalyses the reaction N-acetyl-alpha-D-glucosamine 1-phosphate + UTP + H(+) = UDP-N-acetyl-alpha-D-glucosamine + diphosphate. It participates in nucleotide-sugar biosynthesis; UDP-N-acetyl-alpha-D-glucosamine biosynthesis; N-acetyl-alpha-D-glucosamine 1-phosphate from alpha-D-glucosamine 6-phosphate (route II): step 2/2. The protein operates within nucleotide-sugar biosynthesis; UDP-N-acetyl-alpha-D-glucosamine biosynthesis; UDP-N-acetyl-alpha-D-glucosamine from N-acetyl-alpha-D-glucosamine 1-phosphate: step 1/1. It functions in the pathway bacterial outer membrane biogenesis; LPS lipid A biosynthesis. In terms of biological role, catalyzes the last two sequential reactions in the de novo biosynthetic pathway for UDP-N-acetylglucosamine (UDP-GlcNAc). The C-terminal domain catalyzes the transfer of acetyl group from acetyl coenzyme A to glucosamine-1-phosphate (GlcN-1-P) to produce N-acetylglucosamine-1-phosphate (GlcNAc-1-P), which is converted into UDP-GlcNAc by the transfer of uridine 5-monophosphate (from uridine 5-triphosphate), a reaction catalyzed by the N-terminal domain. This chain is Bifunctional protein GlmU, found in Brucella melitensis biotype 1 (strain ATCC 23456 / CCUG 17765 / NCTC 10094 / 16M).